Consider the following 82-residue polypeptide: Putative membrane protein insertion efficiency factor (82 aa).

It belongs to the UPF0161 family.

The protein resides in the cell inner membrane. In terms of biological role, could be involved in insertion of integral membrane proteins into the membrane. The polypeptide is Putative membrane protein insertion efficiency factor (Francisella tularensis subsp. holarctica (strain LVS)).